Reading from the N-terminus, the 405-residue chain is Argininosuccinate synthase (405 aa).

ATP contacts are provided by residues 10-18 (AYSGGLDTS) and Ala-37. Residues Tyr-88 and Ser-93 each coordinate L-citrulline. Gly-118 provides a ligand contact to ATP. L-aspartate is bound by residues Thr-120, Asn-124, and Asp-125. Asn-124 provides a ligand contact to L-citrulline. Residues Arg-128, Ser-179, Ser-188, Glu-264, and Tyr-276 each contribute to the L-citrulline site.

This sequence belongs to the argininosuccinate synthase family. Type 1 subfamily. As to quaternary structure, homotetramer.

The protein resides in the cytoplasm. The enzyme catalyses L-citrulline + L-aspartate + ATP = 2-(N(omega)-L-arginino)succinate + AMP + diphosphate + H(+). It functions in the pathway amino-acid biosynthesis; L-arginine biosynthesis; L-arginine from L-ornithine and carbamoyl phosphate: step 2/3. The protein is Argininosuccinate synthase of Pseudomonas aeruginosa (strain LESB58).